The following is a 31-amino-acid chain: Cytochrome b6-f complex subunit 6 (31 aa).

A helical membrane pass occupies residues 4-24; that stretch reads VVSYLGILAAFALVTIGIFLV.

Belongs to the PetL family. In terms of assembly, the 4 large subunits of the cytochrome b6-f complex are cytochrome b6, subunit IV (17 kDa polypeptide, PetD), cytochrome f and the Rieske protein, while the 4 small subunits are PetG, PetL, PetM and PetN. The complex functions as a dimer.

The protein localises to the plastid. The protein resides in the chloroplast thylakoid membrane. Functionally, component of the cytochrome b6-f complex, which mediates electron transfer between photosystem II (PSII) and photosystem I (PSI), cyclic electron flow around PSI, and state transitions. PetL is important for photoautotrophic growth as well as for electron transfer efficiency and stability of the cytochrome b6-f complex. This is Cytochrome b6-f complex subunit 6 from Mesostigma viride (Green alga).